The chain runs to 263 residues: Purine nucleoside phosphorylase SAS1121 (263 aa).

3 residues coordinate Zn(2+): His79, Cys124, and His141.

Belongs to the purine nucleoside phosphorylase YfiH/LACC1 family. In terms of assembly, homodimer. The cofactor is Cu(2+). It depends on Zn(2+) as a cofactor.

It catalyses the reaction adenosine + phosphate = alpha-D-ribose 1-phosphate + adenine. It carries out the reaction S-methyl-5'-thioadenosine + phosphate = 5-(methylsulfanyl)-alpha-D-ribose 1-phosphate + adenine. The enzyme catalyses inosine + phosphate = alpha-D-ribose 1-phosphate + hypoxanthine. The catalysed reaction is adenosine + H2O + H(+) = inosine + NH4(+). Purine nucleoside enzyme that catalyzes the phosphorolysis of adenosine and inosine nucleosides, yielding D-ribose 1-phosphate and the respective free bases, adenine and hypoxanthine. Also catalyzes the phosphorolysis of S-methyl-5'-thioadenosine into adenine and S-methyl-5-thio-alpha-D-ribose 1-phosphate. Also has adenosine deaminase activity. The chain is Purine nucleoside phosphorylase SAS1121 from Staphylococcus aureus (strain MSSA476).